Here is a 143-residue protein sequence, read N- to C-terminus: Antiholin-like protein LrgA (143 aa).

Transmembrane regions (helical) follow at residues valine 6 to isoleucine 26, leucine 30 to leucine 50, leucine 61 to isoleucine 81, and valine 97 to leucine 117.

It belongs to the CidA/LrgA family. LrgA subfamily.

It is found in the cell membrane. In terms of biological role, inhibits the expression or activity of extracellular murein hydrolases by interacting, possibly with LrgB, with the holin-like protein CidA. The LrgAB and CidA proteins may affect the proton motive force of the membrane. May be involved in programmed cell death (PCD), possibly triggering PCD in response to antibiotics and environmental stresses. In Bacillus cereus (strain AH187), this protein is Antiholin-like protein LrgA.